The chain runs to 271 residues: Autophagy-related protein 27 (271 aa).

The signal sequence occupies residues 1-19 (MVSKTWICGFISIITVVQA). An MRH domain is found at 20–166 (LSCEKHDVLK…TLKGPSGCLK (147 aa)). At 20-197 (LSCEKHDVLK…KKPAKKAGGT (178 aa)) the chain is on the lumenal side. Intrachain disulfides connect C22-C60, C71-C78, and C135-C164. A disordered region spans residues 161 to 190 (PSGCLKSKDDDKKNGDGDNGKDGDNEGKKP). The segment covering 166 to 189 (KSKDDDKKNGDGDNGKDGDNEGKK) has biased composition (basic and acidic residues). The chain crosses the membrane as a helical span at residues 198–218 (LWFTWLFLYALLFTLIYLMVV). At 219-271 (SFLNTRGGSFQDFRAEFIQRSTQFLTSLPEFCREVVSRILGRSTAQRGGYSAV) the chain is on the cytoplasmic side.

This sequence belongs to the ATG27 family. In terms of assembly, forms a complex with ATG9 and ATG23.

The protein resides in the cytoplasmic vesicle membrane. The protein localises to the golgi apparatus membrane. It is found in the mitochondrion membrane. It localises to the preautophagosomal structure membrane. Functionally, effector of VPS34 phosphatidylinositol 3-phosphate kinase signaling. Regulates the cytoplasm to vacuole transport (Cvt) vesicle formation. Plays a role in ATG protein retrieval from the pre-autophagosomal structure (PAS) and is especially required for autophagy-dependent cycling of ATG9. The polypeptide is Autophagy-related protein 27 (ATG27) (Saccharomyces cerevisiae (strain YJM789) (Baker's yeast)).